The following is a 183-amino-acid chain: Proton-transporting V-type ATPase complex assembly regulator TMEM9 (183 aa).

Residues 1–20 (MKLLCLVAVVGCLLVPPAQA) form the signal peptide. N21, N38, and N47 each carry an N-linked (GlcNAc...) asparagine glycan. Residues 21 to 89 (NKSSEDIRCK…YEERSTTTIK (69 aa)) lie on the Extracellular side of the membrane. The helical transmembrane segment at 90-110 (VIIVIYLSVVGALLLYMAFLM) threads the bilayer. Over 111–183 (LVDPLIRKPD…TVFDRHKMLS (73 aa)) the chain is Cytoplasmic. S144 carries the post-translational modification Phosphoserine.

It belongs to the TMEM9 family. Interacts with the v-ATPase accessory protein ATP6AP2 and with the v-ATPase complex subunit ATP6V0D1; these interactions lead to the assembly of the v-ATPase complex. In terms of processing, N-glycosylated. As to expression, expressed in heart, lung, kidney, liver and intestines. Enriched in the hepatocytes around the central vein.

The protein localises to the lysosome membrane. The protein resides in the late endosome membrane. Its subcellular location is the endosome. It localises to the multivesicular body membrane. In terms of biological role, transmembrane protein that binds to and facilitates the assembly of lysosomal proton-transporting V-type ATPase (v-ATPase), resulting in enhanced lysosomal acidification and trafficking. By bringing the v-ATPase accessory protein ATP6AP2 and the v-ATPase subunit ATP6V0D1 together, allows v-ATPase complex formation and activation. TMEM9-controlled vesicular acidification induces hyperactivation of Wnt/beta-catenin signaling, involved in development, tissue homeostasis and tissue regeneration, through lysosomal degradation of adenomatous polyposis coli/APC. In the liver, involved in hepatic regeneration. The polypeptide is Proton-transporting V-type ATPase complex assembly regulator TMEM9 (Mus musculus (Mouse)).